Here is a 735-residue protein sequence, read N- to C-terminus: Protein PAT1 homolog 2 (735 aa).

Disordered stretches follow at residues 39-93 (TFGL…REVK) and 336-366 (QLHP…PDPY). 2 stretches are compositionally biased toward basic and acidic residues: residues 49-59 (EPTKQEEDHKK) and 67-93 (PKIE…REVK). Over residues 346–356 (SQRQRPQSSSR) the composition is skewed to low complexity.

This sequence belongs to the PAT1 family. Interacts with ribonucleoprotein complex components. Interacts with cpeb.

The protein resides in the cytoplasm. The protein localises to the nucleus. Functionally, RNA-binding protein that acts as a translational repressor. The chain is Protein PAT1 homolog 2 (patl2) from Xenopus tropicalis (Western clawed frog).